Consider the following 75-residue polypeptide: Probable pilin MJ0431 (75 aa).

The propeptide occupies 1 to 15 (MGKMKILKKLLSKKG). The QXSXEXXXL motif lies at 16–24 (QLSMEVGVL).

In terms of processing, the N-terminus is cleaved by the prepilin peptidase EppA, which recognizes the class III signal sequence.

It localises to the secreted. The protein resides in the cell surface. The protein localises to the fimbrium. The polypeptide is Probable pilin MJ0431 (Methanocaldococcus jannaschii (strain ATCC 43067 / DSM 2661 / JAL-1 / JCM 10045 / NBRC 100440) (Methanococcus jannaschii)).